Consider the following 422-residue polypeptide: MDFLEIVGQVPLKGEVEISGAKNSALPILAATLLSRQEVKIKSLPQVVDIKAMALLLQNLGASLEWLNPNTLQIGAKSLNHTEATYDLVRKMRASILVLGPLLARFKECLVSLPGGCAIGARPVDLHLKAMQQLGAKITIEQGYIHAKAPKGLKGNDILFDKISVTGTENALMAASLAKGITRIINAAKEPEIAQLCAFLQSGGVEIHGIGSSELKIRGVENDALNLKDIQIIPDRIEAGTYLCVGAITNSQLKINHIIPNHLQAITDKLIEIGFSLDIQENSIEIHPAKKRQAFEITTKEYPGFPTDMQAQFMALATQCLGTSVIEETLFENRFMHASELQRLGANISLKTNVATISGSTELTGSDVMATDLRASSALVLAALVAKGVSRVHRIYHLDRGYERLEDKINALGAKVARLKEK.

22–23 (KN) provides a ligand contact to phosphoenolpyruvate. Arg93 serves as a coordination point for UDP-N-acetyl-alpha-D-glucosamine. Cys117 functions as the Proton donor in the catalytic mechanism. Position 117 is a 2-(S-cysteinyl)pyruvic acid O-phosphothioketal (Cys117). Residues 122–126 (RPVDL), Asp308, and Leu330 contribute to the UDP-N-acetyl-alpha-D-glucosamine site.

Belongs to the EPSP synthase family. MurA subfamily.

The protein localises to the cytoplasm. The catalysed reaction is phosphoenolpyruvate + UDP-N-acetyl-alpha-D-glucosamine = UDP-N-acetyl-3-O-(1-carboxyvinyl)-alpha-D-glucosamine + phosphate. The protein operates within cell wall biogenesis; peptidoglycan biosynthesis. In terms of biological role, cell wall formation. Adds enolpyruvyl to UDP-N-acetylglucosamine. The polypeptide is UDP-N-acetylglucosamine 1-carboxyvinyltransferase (Helicobacter pylori (strain ATCC 700392 / 26695) (Campylobacter pylori)).